Consider the following 469-residue polypeptide: MNPNQKIITIGSVSLTFAAICFLMQIAILVTTVTLNFKQYECDPPATNQVMPCEPIIIERNITEIVYLTNTTIEREICPKLVEYRNWSKPQCKITGFAPFSKDNSIRLSAGGDIWVTREPYVSCDPGRCYQFALGQGTTLDNKHSNDTIHDRTPHRTLLMNELGVPFHLGTRQVCIAWSSSSCHDGKAWLHVCITGYDKNATASFIYDGRLVDSIGSWSKNILRTQESECVCINGTCTVVMTDGSASGRADTRILFIEEGRIVHISPLSGSAQHVEECSCYPRYPGVRCICRDNWKGSNRPVVDINVKDYSINSSYVCSGLVGDTPRNNDRSSNSYCQNPNNEKGNHGVKGWAFDDGNDVWMGRTISEDSRSGYQTFKVIGGWSTPNSKLQINRQVIVDSDNRSGYSGIFSVEGKSCINRCFYVELIRGRRQETRVWWTSNSIVVFCGTSGTYGTGSWPDGADINLMPI.

Residues 1–9 (MNPNQKIIT) are Intravirion-facing. Residues 10–30 (IGSVSLTFAAICFLMQIAILV) form a helical membrane-spanning segment. An involved in apical transport and lipid raft association region spans residues 11-33 (GSVSLTFAAICFLMQIAILVTTV). Residues 31 to 469 (TTVTLNFKQY…DGADINLMPI (439 aa)) are Virion surface-facing. The tract at residues 36–88 (NFKQYECDPPATNQVMPCEPIIIERNITEIVYLTNTTIEREICPKLVEYRNWS) is hypervariable stalk region. N-linked (GlcNAc...) asparagine; by host glycans are attached at residues asparagine 61, asparagine 70, and asparagine 86. The interval 91–469 (QCKITGFAPF…DGADINLMPI (379 aa)) is head of neuraminidase. Disulfide bonds link cysteine 92–cysteine 417, cysteine 124–cysteine 129, cysteine 183–cysteine 230, cysteine 232–cysteine 237, cysteine 278–cysteine 291, cysteine 280–cysteine 289, cysteine 318–cysteine 337, and cysteine 421–cysteine 447. Residue arginine 118 coordinates substrate. N-linked (GlcNAc...) asparagine; by host glycosylation is present at asparagine 146. Aspartate 151 acts as the Proton donor/acceptor in catalysis. Arginine 152 lines the substrate pocket. 2 N-linked (GlcNAc...) asparagine; by host glycosylation sites follow: asparagine 200 and asparagine 234. A substrate-binding site is contributed by 276 to 277 (EE). Arginine 292 provides a ligand contact to substrate. Ca(2+) contacts are provided by aspartate 293 and glycine 297. A glycan (N-linked (GlcNAc...) asparagine; by host) is linked at asparagine 313. Aspartate 324 contributes to the Ca(2+) binding site. Arginine 371 contributes to the substrate binding site. The N-linked (GlcNAc...) asparagine; by host glycan is linked to asparagine 402. The active-site Nucleophile is tyrosine 406.

Belongs to the glycosyl hydrolase 34 family. In terms of assembly, homotetramer. It depends on Ca(2+) as a cofactor. N-glycosylated.

It is found in the virion membrane. The protein resides in the host apical cell membrane. The catalysed reaction is Hydrolysis of alpha-(2-&gt;3)-, alpha-(2-&gt;6)-, alpha-(2-&gt;8)- glycosidic linkages of terminal sialic acid residues in oligosaccharides, glycoproteins, glycolipids, colominic acid and synthetic substrates.. With respect to regulation, inhibited by the neuraminidase inhibitors zanamivir (Relenza) and oseltamivir (Tamiflu). These drugs interfere with the release of progeny virus from infected cells and are effective against all influenza strains. Resistance to neuraminidase inhibitors is quite rare. In terms of biological role, catalyzes the removal of terminal sialic acid residues from viral and cellular glycoconjugates. Cleaves off the terminal sialic acids on the glycosylated HA during virus budding to facilitate virus release. Additionally helps virus spread through the circulation by further removing sialic acids from the cell surface. These cleavages prevent self-aggregation and ensure the efficient spread of the progeny virus from cell to cell. Otherwise, infection would be limited to one round of replication. Described as a receptor-destroying enzyme because it cleaves a terminal sialic acid from the cellular receptors. May facilitate viral invasion of the upper airways by cleaving the sialic acid moieties on the mucin of the airway epithelial cells. Likely to plays a role in the budding process through its association with lipid rafts during intracellular transport. May additionally display a raft-association independent effect on budding. Plays a role in the determination of host range restriction on replication and virulence. Sialidase activity in late endosome/lysosome traffic seems to enhance virus replication. The sequence is that of Neuraminidase from Influenza A virus (strain A/Swine/Kanagawa/2/1978 H1N2).